The sequence spans 277 residues: NADPH-dependent 7-cyano-7-deazaguanine reductase (277 aa).

A substrate-binding site is contributed by 83 to 85 (VES). 85–86 (SK) lines the NADPH pocket. C184 acts as the Thioimide intermediate in catalysis. The active-site Proton donor is the D191. 223–224 (HE) serves as a coordination point for substrate. NADPH is bound at residue 252-253 (RG).

This sequence belongs to the GTP cyclohydrolase I family. QueF type 2 subfamily. In terms of assembly, homodimer.

The protein localises to the cytoplasm. The catalysed reaction is 7-aminomethyl-7-carbaguanine + 2 NADP(+) = 7-cyano-7-deazaguanine + 2 NADPH + 3 H(+). It functions in the pathway tRNA modification; tRNA-queuosine biosynthesis. Its function is as follows. Catalyzes the NADPH-dependent reduction of 7-cyano-7-deazaguanine (preQ0) to 7-aminomethyl-7-deazaguanine (preQ1). The sequence is that of NADPH-dependent 7-cyano-7-deazaguanine reductase from Ralstonia nicotianae (strain ATCC BAA-1114 / GMI1000) (Ralstonia solanacearum).